Here is a 570-residue protein sequence, read N- to C-terminus: Methionine--tRNA ligase (570 aa).

A 'HIGH' region motif is present at residues 11–21; sequence PYVQTVPHLGN. The Zn(2+) site is built by Cys-143, Cys-146, Cys-156, and Cys-159. Residues 333–337 carry the 'KMSKS' region motif; sequence KFSKS. Lys-336 is a binding site for ATP.

This sequence belongs to the class-I aminoacyl-tRNA synthetase family. MetG type 1 subfamily. Zn(2+) serves as cofactor.

It is found in the cytoplasm. The catalysed reaction is tRNA(Met) + L-methionine + ATP = L-methionyl-tRNA(Met) + AMP + diphosphate. In terms of biological role, is required not only for elongation of protein synthesis but also for the initiation of all mRNA translation through initiator tRNA(fMet) aminoacylation. In Pyrobaculum arsenaticum (strain DSM 13514 / JCM 11321 / PZ6), this protein is Methionine--tRNA ligase.